The following is a 181-amino-acid chain: Dual-action ribosomal maturation protein DarP (181 aa).

Residues 1-23 (MTGIKKPMSQYQDDNELEDWGPS) are disordered.

It belongs to the DarP family.

The protein localises to the cytoplasm. Member of a network of 50S ribosomal subunit biogenesis factors which assembles along the 30S-50S interface, preventing incorrect 23S rRNA structures from forming. Promotes peptidyl transferase center (PTC) maturation. The polypeptide is Dual-action ribosomal maturation protein DarP (Aeromonas salmonicida (strain A449)).